Consider the following 382-residue polypeptide: Probable inactive dehydrogenase easA (382 aa).

Residues 25 to 27 (PMT), Ala-60, Gln-102, and His-171 contribute to the FMN site. Residues His-171 and Asn-174 each contribute to the substrate site. FMN-binding positions include Lys-223, Gly-299, 324–325 (GR), and Arg-325. Position 352 (Tyr-352) interacts with substrate.

This sequence belongs to the NADH:flavin oxidoreductase/NADH oxidase family.

Its function is as follows. Probable inactive dehydrogenase; part of the gene cluster that mediates the biosynthesis of fungal ergot alkaloid. DmaW catalyzes the first step of ergot alkaloid biosynthesis by condensing dimethylallyl diphosphate (DMAP) and tryptophan to form 4-dimethylallyl-L-tryptophan. The second step is catalyzed by the methyltransferase easF that methylates 4-dimethylallyl-L-tryptophan in the presence of S-adenosyl-L-methionine, resulting in the formation of 4-dimethylallyl-L-abrine. The catalase easC and the FAD-dependent oxidoreductase easE then transform 4-dimethylallyl-L-abrine to chanoclavine-I which is further oxidized by easD in the presence of NAD(+), resulting in the formation of chanoclavine-I aldehyde. Agroclavine dehydrogenase easG then mediates the conversion of chanoclavine-I aldehyde to agroclavine via a non-enzymatic adduct reaction: the substrate is an iminium intermediate that is formed spontaneously from chanoclavine-I aldehyde in the presence of glutathione. Further conversion of agroclavine to paspalic acid is a two-step process involving oxidation of agroclavine to elymoclavine and of elymoclavine to paspalic acid, the second step being performed by the elymoclavine oxidase cloA. However, cloA does not encode a functional enzyme indicating that C.fusiformis terminates its ergot alkaloid pathway at elymoclavine. The sequence is that of Probable inactive dehydrogenase easA from Claviceps fusiformis (Ergot fungus).